The following is a 765-amino-acid chain: Transcription factor SKN7 (765 aa).

Residues 1 to 42 (MPPTNGEGGSQQPQQQQQQQQQQQQQQQQQQQQQQGGSGSSD) form a disordered region. The segment covering 11-35 (QQPQQQQQQQQQQQQQQQQQQQQQQ) has biased composition (low complexity). The DNA-binding domain stretch occupies residues 40–145 (SSDFVRKLYK…NLDNIRRKAP (106 aa)). The stretch at 157–198 (FNASQQQIAALSESLQATQQQLQALQQQCYELEKTNRLLVSE) forms a coiled coil. Residues 160 to 220 (SQQQIAALSE…QASNEIINHL (61 aa)) form a hydrophobic repeat HR-A/B region. Positions 371–391 (SSSQITPSQITPPPKDQMSSM) are disordered. The Response regulatory domain maps to 398–514 (RVLLVEDDKT…NMSRLLRRHL (117 aa)). At Asp-449 the chain carries 4-aspartylphosphate. The segment at 542–765 (TAGPATTGVG…PGVGVAGFVQ (224 aa)) is transactivation domain. Residues 550 to 564 (VGVGVAGAPSGGAHG) are compositionally biased toward gly residues. 2 disordered regions span residues 550–647 (VGVG…PAGL) and 686–765 (PGAM…GFVQ). A compositionally biased stretch (low complexity) spans 569-584 (AQHQQGYAMAPPTTMQ). The segment covering 626–636 (QPPPPPTPTQP) has biased composition (pro residues). Low complexity-rich tracts occupy residues 637-647 (SPTSAAPPAGL) and 699-715 (GVGH…AGAR). Residues 755 to 765 (HPGVGVAGFVQ) show a composition bias toward gly residues.

This sequence belongs to the SKN7 family. Homotrimer.

The protein localises to the nucleus. Functionally, transcription factor that is part of a SLN1-YPD1-SKN7 two-component regulatory system, which controls gene expression in response to changes in the osmolarity of the extracellular environment. Under low osmotic conditions, phosphorylated and activated by the phosphorelay intermediate protein YPD1. Also activated in response to oxidative stress, independent on the two-component regulatory system. Regulates heat shock genes in response to oxidative stress and genes involved in cell wall integrity in response to osmotic changes. The protein is Transcription factor SKN7 of Chaetomium thermophilum (strain DSM 1495 / CBS 144.50 / IMI 039719) (Thermochaetoides thermophila).